Reading from the N-terminus, the 90-residue chain is Probable Fe(2+)-trafficking protein (90 aa).

This sequence belongs to the Fe(2+)-trafficking protein family.

In terms of biological role, could be a mediator in iron transactions between iron acquisition and iron-requiring processes, such as synthesis and/or repair of Fe-S clusters in biosynthetic enzymes. The chain is Probable Fe(2+)-trafficking protein from Leptothrix cholodnii (strain ATCC 51168 / LMG 8142 / SP-6) (Leptothrix discophora (strain SP-6)).